Consider the following 244-residue polypeptide: Uridylate kinase (244 aa).

18 to 21 (KVSG) contacts ATP. Residue glycine 60 coordinates UMP. The ATP site is built by glycine 61 and arginine 65. Residues aspartate 80 and 141 to 148 (TGNPFCTT) contribute to the UMP site. The ATP site is built by threonine 168, glutamine 169, tyrosine 174, and aspartate 177.

This sequence belongs to the UMP kinase family. As to quaternary structure, homohexamer.

Its subcellular location is the cytoplasm. It carries out the reaction UMP + ATP = UDP + ADP. It participates in pyrimidine metabolism; CTP biosynthesis via de novo pathway; UDP from UMP (UMPK route): step 1/1. With respect to regulation, inhibited by UTP. Functionally, catalyzes the reversible phosphorylation of UMP to UDP. The polypeptide is Uridylate kinase (Rickettsia typhi (strain ATCC VR-144 / Wilmington)).